Here is a 105-residue protein sequence, read N- to C-terminus: UPF0145 protein Aflv_1588 (105 aa).

Belongs to the UPF0145 family.

This chain is UPF0145 protein Aflv_1588, found in Anoxybacillus flavithermus (strain DSM 21510 / WK1).